The following is a 226-amino-acid chain: MVNSRSPYRSPLSTLGGNNIQSVVPMVVEQSGMGERAFDIYSRLLRERIIFLGTPVDDQVADSIVAQLLFLDAEDPEKDIQLYINSPGGSVYAGLAIYDTMQQIRPDVVTICFGLAASMGAFLLSGGCKGKRMALPSSRIMIHQPLGGAQGQAVEIEIQAREILYIKDRLNTMLVEHTGQPMEKLQEDTERDFFMSAEEAKEYGLIDQVISRPNLPDPTTPVTSLG.

Residue serine 118 is the Nucleophile of the active site. Histidine 143 is a catalytic residue.

This sequence belongs to the peptidase S14 family. In terms of assembly, fourteen ClpP subunits assemble into 2 heptameric rings which stack back to back to give a disk-like structure with a central cavity, resembling the structure of eukaryotic proteasomes.

The protein localises to the cytoplasm. It catalyses the reaction Hydrolysis of proteins to small peptides in the presence of ATP and magnesium. alpha-casein is the usual test substrate. In the absence of ATP, only oligopeptides shorter than five residues are hydrolyzed (such as succinyl-Leu-Tyr-|-NHMec, and Leu-Tyr-Leu-|-Tyr-Trp, in which cleavage of the -Tyr-|-Leu- and -Tyr-|-Trp bonds also occurs).. In terms of biological role, cleaves peptides in various proteins in a process that requires ATP hydrolysis. Has a chymotrypsin-like activity. Plays a major role in the degradation of misfolded proteins. The sequence is that of ATP-dependent Clp protease proteolytic subunit 2 from Synechocystis sp. (strain ATCC 27184 / PCC 6803 / Kazusa).